The following is a 147-amino-acid chain: METLTAISRWLAKQHVVTWCVQQEGELWCANAFYLFDVQKVAFYILTEEKTRHAQMSGPQAAVAGTVNGQPKTVALIRGVQFKGEIRRLEGEESDLARKAYNRRFPVARMLSAPVWEIRPDEIKFTDNTLGFGKKMIWLRGSGTEQA.

This sequence belongs to the UPF0306 family.

The protein is UPF0306 protein YhbP of Escherichia coli O157:H7.